A 419-amino-acid polypeptide reads, in one-letter code: Endochitinase 2 (419 aa).

Positions 1–18 are cleaved as a signal peptide; it reads MHHLRALVGVGLAGLAAG. The GH18 domain occupies 35-343; sequence AQNVVYWGQN…QQAKSILVNG (309 aa). Residue Asn-153 is glycosylated (N-linked (GlcNAc...) asparagine). The Proton donor role is filled by Glu-173. N-linked (GlcNAc...) asparagine glycans are attached at residues Asn-237 and Asn-256. Over residues 350–381 the composition is skewed to low complexity; that stretch reads GPPSSTPATAPAPTATTMPSSTSVSSPAASPT. The interval 350–386 is disordered; it reads GPPSSTPATAPAPTATTMPSSTSVSSPAASPTGGTVP. In terms of domain architecture, CBM1 spans 383–419; sequence GTVPQWGQCGGEGYSGPTQCVAPYQCVKQGDWWSSCR.

It belongs to the glycosyl hydrolase 18 family. Chitinase class III subfamily.

It localises to the secreted. It catalyses the reaction Random endo-hydrolysis of N-acetyl-beta-D-glucosaminide (1-&gt;4)-beta-linkages in chitin and chitodextrins.. In terms of biological role, secreted chitinase involved in the degradation of chitin, a component of the cell walls of fungi and exoskeletal elements of some animals (including worms and arthropods). Participates in the infection process and directly acts in the penetration process of the host cuticle. In Metarhizium robertsii (strain ARSEF 23 / ATCC MYA-3075) (Metarhizium anisopliae (strain ARSEF 23)), this protein is Endochitinase 2 (chi2).